Consider the following 724-residue polypeptide: Acyl-coenzyme A oxidase 2 (724 aa).

Residues 1–23 (MALISNLKDEYDHPTKTDPDTNP) form a disordered region. Residues 7–21 (LKDEYDHPTKTDPDT) show a composition bias toward basic and acidic residues.

It belongs to the acyl-CoA oxidase family. FAD is required as a cofactor.

The protein localises to the peroxisome. It carries out the reaction a 2,3-saturated acyl-CoA + O2 = a (2E)-enoyl-CoA + H2O2. It participates in lipid metabolism; peroxisomal fatty acid beta-oxidation. The polypeptide is Acyl-coenzyme A oxidase 2 (POX2) (Candida maltosa (Yeast)).